Consider the following 770-residue polypeptide: Transferrin receptor protein 1 (770 aa).

Topologically, residues 1–70 are cytoplasmic; the sequence is MMDQARSAFS…KPKRCNGFIC (70 aa). Residues 1–70 are mediates interaction with SH3BP4; it reads MMDQARSAFS…KPKRCNGFIC (70 aa). Phosphoserine is present on residues S10 and S19. Position 20 is a phosphotyrosine (Y20). An Endocytosis signal motif is present at residues 20-23; the sequence is YTRF. T21 is subject to Phosphothreonine. A Phosphoserine modification is found at S24. The Stop-transfer sequence signature appears at 61–64; that stretch reads KPKR. S-palmitoyl cysteine attachment occurs at residues C65 and C70. Residues 71-90 traverse the membrane as a helical; Signal-anchor for type II membrane protein segment; sequence YGTIAVVLFFLIGFMIGYLG. Residues 91–770 are Extracellular-facing; it reads YCKRVEPKAG…GDIWDIDNEF (680 aa). The disordered stretch occupies residues 102-122; it reads ERPTGTEALGTERTEPSETEE. T107 carries an O-linked (GalNAc...) threonine glycan. The region spanning 233 to 323 is the PA domain; that stretch reads SKATTVTGRL…GTGDPYTPGF (91 aa). N261, N327, and N384 each carry an N-linked (GlcNAc...) asparagine glycan. A ligand-binding region spans residues 579-770; sequence TMDLYENLNQ…GDIWDIDNEF (192 aa). A Cell attachment site motif is present at residues 656 to 658; that stretch reads RGD. N732 and N737 each carry an N-linked (GlcNAc...) asparagine glycan.

The protein belongs to the peptidase M28 family. M28B subfamily. In terms of assembly, homodimer; disulfide-linked. Binds one transferrin molecule per subunit. Interacts with SH3BP4. Interacts with STEAP3; facilitates TFRC endocytosis in erythroid precursor cells. Post-translationally, stearoylated by ZDHHC6 which inhibits TFRC-mediated activation of the JNK pathway and promotes mitochondrial fragmentation. Stearoylation does not affect iron uptake. In terms of processing, N- and O-glycosylated, phosphorylated and palmitoylated.

The protein localises to the cell membrane. The protein resides in the melanosome. In terms of biological role, cellular uptake of iron occurs via receptor-mediated endocytosis of ligand-occupied transferrin receptor into specialized endosomes. Endosomal acidification leads to iron release. The apotransferrin-receptor complex is then recycled to the cell surface with a return to neutral pH and the concomitant loss of affinity of apotransferrin for its receptor. Transferrin receptor is necessary for development of erythrocytes and the nervous system. Positively regulates T and B cell proliferation through iron uptake. Acts as a lipid sensor that regulates mitochondrial fusion by regulating activation of the JNK pathway. When dietary levels of stearate (C18:0) are low, promotes activation of the JNK pathway, resulting in HUWE1-mediated ubiquitination and subsequent degradation of the mitofusin MFN2 and inhibition of mitochondrial fusion. When dietary levels of stearate (C18:0) are high, TFRC stearoylation inhibits activation of the JNK pathway and thus degradation of the mitofusin MFN2. Mediates uptake of NICOL1 into fibroblasts where it may regulate extracellular matrix production. This chain is Transferrin receptor protein 1 (TFRC), found in Canis lupus familiaris (Dog).